The chain runs to 173 residues: ATP-dependent protease subunit HslV (173 aa).

Threonine 2 is a catalytic residue. Residues glycine 157, cysteine 160, and threonine 163 each contribute to the Na(+) site.

The protein belongs to the peptidase T1B family. HslV subfamily. A double ring-shaped homohexamer of HslV is capped on each side by a ring-shaped HslU homohexamer. The assembly of the HslU/HslV complex is dependent on binding of ATP.

It localises to the cytoplasm. The enzyme catalyses ATP-dependent cleavage of peptide bonds with broad specificity.. With respect to regulation, allosterically activated by HslU binding. Protease subunit of a proteasome-like degradation complex believed to be a general protein degrading machinery. The chain is ATP-dependent protease subunit HslV from Nitrosomonas eutropha (strain DSM 101675 / C91 / Nm57).